Consider the following 441-residue polypeptide: Arginine biosynthesis bifunctional protein ArgJ, mitochondrial (441 aa).

The substrate site is built by Thr177, Lys204, Thr215, Glu301, Asn436, and Ser441. Thr215 functions as the Nucleophile in the catalytic mechanism.

This sequence belongs to the ArgJ family. In terms of assembly, heterodimer of an alpha and a beta chain. In terms of processing, the alpha and beta chains are autoproteolytically processed from a single precursor protein within the mitochondrion.

It is found in the mitochondrion matrix. The catalysed reaction is N(2)-acetyl-L-ornithine + L-glutamate = N-acetyl-L-glutamate + L-ornithine. It carries out the reaction L-glutamate + acetyl-CoA = N-acetyl-L-glutamate + CoA + H(+). It functions in the pathway amino-acid biosynthesis; L-arginine biosynthesis; L-ornithine and N-acetyl-L-glutamate from L-glutamate and N(2)-acetyl-L-ornithine (cyclic): step 1/1. Its pathway is amino-acid biosynthesis; L-arginine biosynthesis; N(2)-acetyl-L-ornithine from L-glutamate: step 1/4. Functionally, catalyzes two activities which are involved in the cyclic version of arginine biosynthesis: the synthesis of acetylglutamate from glutamate and acetyl-CoA, and of ornithine by transacetylation between acetylornithine and glutamate. This Lachancea thermotolerans (strain ATCC 56472 / CBS 6340 / NRRL Y-8284) (Yeast) protein is Arginine biosynthesis bifunctional protein ArgJ, mitochondrial.